Here is a 482-residue protein sequence, read N- to C-terminus: G patch domain-containing protein 2-like (482 aa).

Phosphoserine is present on residues S31, S86, and S88. The residue at position 91 (T91) is a Phosphothreonine. 2 disordered regions span residues S195–D222 and K408–C482. The segment covering G198–D215 has biased composition (basic and acidic residues). Over residues V414 to P427 the composition is skewed to low complexity. Polar residues predominate over residues E468–C482.

This Mus musculus (Mouse) protein is G patch domain-containing protein 2-like (Gpatch2l).